The chain runs to 874 residues: Ectonucleotide pyrophosphatase/phosphodiesterase family member 3 (874 aa).

The Cytoplasmic segment spans residues M1–E11. Residues P12–A30 form a helical; Signal-anchor for type II membrane protein membrane-spanning segment. The Extracellular segment spans residues L31 to I874. SMB domains are found at residues Q51 to T93 and Q94 to P138. 13 disulfides stabilise this stretch: C54/C58, C54/C71, C58/C89, C69/C71, C69/C82, C75/C81, C82/C89, C98/C115, C103/C133, C113/C126, C119/C125, C144/C190, and C152/C364. The short motif at R78–D80 is the Cell attachment site element. A phosphodiesterase region spans residues P160–T544. Position 167 (D167) interacts with Zn(2+). K204 contacts ATP. T205 is a binding site for Zn(2+). The Nucleophile role is filled by T205. N226 contacts ATP. N-linked (GlcNAc...) asparagine glycosylation is present at N236. D275 is a binding site for ATP. N279 and N288 each carry an N-linked (GlcNAc...) asparagine glycan. Residue Y289 coordinates ATP. D325, H329, D372, and H373 together coordinate Zn(2+). Intrachain disulfides connect C380/C477, C428/C817, C561/C623, C574/C679, C576/C664, and C786/C796. Residue N425 is glycosylated (N-linked (GlcNAc...) asparagine). Residue H482 coordinates Zn(2+). Residues N532, N594, N687, and N701 are each glycosylated (N-linked (GlcNAc...) asparagine). A nuclease region spans residues N581–I874. Ca(2+)-binding residues include D751, N753, D755, H757, and D759. N820 is a glycosylation site (N-linked (GlcNAc...) asparagine).

Monomer and homodimer. Requires Zn(2+) as cofactor. N-glycosylated. N-glycosylation is necessary for normal transport to the cell membrane, but is not the apical targeting signal. Detected at the tip of villi in the small intestine. Detected on basophils and mast cells (at protein level). Detected in the epithelial layer of the small intestine; expression is higher in the proximal part and lower in the distal part of the small intestine.

It is found in the cell membrane. Its subcellular location is the apical cell membrane. It localises to the secreted. The enzyme catalyses a ribonucleoside 5'-triphosphate + H2O = a ribonucleoside 5'-phosphate + diphosphate + H(+). The catalysed reaction is UDP-N-acetyl-alpha-D-glucosamine + H2O = N-acetyl-alpha-D-glucosamine 1-phosphate + UMP + 2 H(+). It catalyses the reaction ATP + H2O = AMP + diphosphate + H(+). It carries out the reaction CTP + H2O = CMP + diphosphate + H(+). The enzyme catalyses GTP + H2O = GMP + diphosphate + H(+). The catalysed reaction is UTP + H2O = UMP + diphosphate + H(+). It catalyses the reaction Hydrolytically removes 5'-nucleotides successively from the 3'-hydroxy termini of 3'-hydroxy-terminated oligonucleotides.. It carries out the reaction P(1),P(3)-bis(5'-adenosyl) triphosphate + H2O = AMP + ADP + 2 H(+). The enzyme catalyses P(1),P(4)-bis(5'-adenosyl) tetraphosphate + H2O = AMP + ATP + 2 H(+). The catalysed reaction is P(1),P(5)-bis(5'-adenosyl) pentaphosphate + H2O = adenosine 5'-tetraphosphate + AMP + 2 H(+). It catalyses the reaction P(1),P(4)-bis(5'-guanosyl) tetraphosphate + H2O = GMP + GTP + 2 H(+). In terms of biological role, hydrolase that metabolizes extracellular nucleotides, including ATP, GTP, UTP and CTP. Limits mast cells and basophils response during inflammation and during the chronic phases of allergic responses by eliminating extracellular ATP, a signaling molecule activating these cells in an autocrine manner. Metabolizes extracellular ATP in the lumen of the small intestine, and thereby prevents ATP-induced apoptosis of intestinal plasmacytoid dendritic cells. Has a broad specificity and can also hydrolyze UDP-GlcNAc into UMP and GlcNAc-1-phosphate and potentially several other intracellular nucleotide sugars, including UDP-GalNAc, CMP-NeuAc, GDP-Fuc, and UDP-GlcA. Thereby, could modulate glycan biosynthesis and protein glycosylation. Can hydrolyze extracellular dinucleoside polyphosphates, including the vasoactive adenosine polyphosphates as well. In addition, displays an alkaline phosphodiesterase activity in vitro. The protein is Ectonucleotide pyrophosphatase/phosphodiesterase family member 3 of Mus musculus (Mouse).